We begin with the raw amino-acid sequence, 545 residues long: Myotubularin-related protein 9 (545 aa).

The residue at position 1 (Met-1) is an N-acetylmethionine. A GRAM domain is found at 4–99 (AELIKTPRVD…LNIASSIEAL (96 aa)). The Myotubularin phosphatase domain occupies 123–498 (GWHSFLPEQE…QSLQLWEGIF (376 aa)). Positions 508–542 (LDEAYEEMVNIIEYNKELQAKVNVLRRQLAELETE) form a coiled coil.

It belongs to the protein-tyrosine phosphatase family. Non-receptor class myotubularin subfamily. In terms of assembly, homodimer. Heterodimer (via C-terminus) with lipid phosphatase MTMR6 (via C-terminus). Heterodimer (via coiled coil domain) with lipid phosphatase MTMR7 (via C-terminus).

Its subcellular location is the cytoplasm. The protein resides in the cell projection. The protein localises to the ruffle membrane. It localises to the perinuclear region. It is found in the endoplasmic reticulum. In terms of biological role, acts as an adapter for myotubularin-related phosphatases. Increases lipid phosphatase MTMR6 catalytic activity, specifically towards phosphatidylinositol 3,5-bisphosphate, and MTMR6 binding affinity for phosphorylated phosphatidylinositols. Positively regulates lipid phosphatase MTMR7 catalytic activity. The formation of the MTMR6-MTMR9 complex, stabilizes both MTMR6 and MTMR9 protein levels. Plays a role in the late stages of macropinocytosis possibly by regulating MTMR6-mediated dephosphorylation of phosphatidylinositol 3-phosphate in membrane ruffles. Negatively regulates DNA damage-induced apoptosis, in part via its association with MTMR6. Does not bind mono-, di- and tri-phosphorylated phosphatidylinositols, phosphatidic acid and phosphatidylserine. The sequence is that of Myotubularin-related protein 9 (Mtmr9) from Mus musculus (Mouse).